We begin with the raw amino-acid sequence, 62 residues long: Large ribosomal subunit protein bL28 (62 aa).

Belongs to the bacterial ribosomal protein bL28 family.

The chain is Large ribosomal subunit protein bL28 from Aliarcobacter butzleri (strain RM4018) (Arcobacter butzleri).